Consider the following 387-residue polypeptide: Phosphoglycerate kinase (387 aa).

Residues 21 to 23 (DLN), Arg36, 59 to 62 (HLGR), Arg113, and Arg146 contribute to the substrate site. Residues Lys197, Glu314, and 340–343 (GGDT) contribute to the ATP site.

The protein belongs to the phosphoglycerate kinase family. In terms of assembly, monomer.

It is found in the cytoplasm. It carries out the reaction (2R)-3-phosphoglycerate + ATP = (2R)-3-phospho-glyceroyl phosphate + ADP. It functions in the pathway carbohydrate degradation; glycolysis; pyruvate from D-glyceraldehyde 3-phosphate: step 2/5. This Aeromonas hydrophila subsp. hydrophila (strain ATCC 7966 / DSM 30187 / BCRC 13018 / CCUG 14551 / JCM 1027 / KCTC 2358 / NCIMB 9240 / NCTC 8049) protein is Phosphoglycerate kinase.